The following is a 203-amino-acid chain: Proteasome subunit beta 2 (203 aa).

A propeptide spans 1–9 (MGEEVQIGA) (removed in mature form; by autocatalysis). Threonine 10 serves as the catalytic Nucleophile.

The protein belongs to the peptidase T1B family. The 20S proteasome core is composed of 14 alpha and 14 beta subunits that assemble into four stacked heptameric rings, resulting in a barrel-shaped structure. The two inner rings, each composed of seven catalytic beta subunits, are sandwiched by two outer rings, each composed of seven alpha subunits. The catalytic chamber with the active sites is on the inside of the barrel. Has a gated structure, the ends of the cylinder being occluded by the N-termini of the alpha-subunits. Is capped at one or both ends by the proteasome regulatory ATPase, PAN.

It localises to the cytoplasm. The catalysed reaction is Cleavage of peptide bonds with very broad specificity.. With respect to regulation, the formation of the proteasomal ATPase PAN-20S proteasome complex, via the docking of the C-termini of PAN into the intersubunit pockets in the alpha-rings, triggers opening of the gate for substrate entry. Interconversion between the open-gate and close-gate conformations leads to a dynamic regulation of the 20S proteasome proteolysis activity. In terms of biological role, component of the proteasome core, a large protease complex with broad specificity involved in protein degradation. This Pyrobaculum arsenaticum (strain DSM 13514 / JCM 11321 / PZ6) protein is Proteasome subunit beta 2.